The sequence spans 177 residues: Parathyroid hormone-related protein (177 aa).

The N-terminal stretch at 1-24 (MLRRLVQQWSVLVFLLSYSVPSRG) is a signal peptide. Residues 25–34 (RSVEGLGRRL) constitute a propeptide that is removed on maturation. Residues 57–68 (RFFLHHLIAEIH) are important for receptor binding. The disordered stretch occupies residues 74-177 (ATSEVSPNSK…TSLEPSSRTH (104 aa)). The segment covering 76–90 (SEVSPNSKPAPNTKN) has biased composition (polar residues). Residues 108–129 (TNKVETYKEQPLKTPGKKKKGK) carry the Nuclear localization signal motif. A compositionally biased stretch (basic and acidic residues) spans 109 to 118 (NKVETYKEQP). The segment covering 122–132 (PGKKKKGKPGK) has biased composition (basic residues). A compositionally biased stretch (low complexity) spans 161–177 (PHTSPTSTSLEPSSRTH).

The protein belongs to the parathyroid hormone family. PTHrP interacts with PTH1R (via N-terminal extracellular domain). Post-translationally, there are several secretory forms, including osteostatin, arising from endoproteolytic cleavage of the initial translation product. Each of these secretory forms is believed to have one or more of its own receptors that mediates the normal paracrine, autocrine and endocrine actions.

The protein localises to the secreted. Its subcellular location is the cytoplasm. The protein resides in the nucleus. Neuroendocrine peptide which is a critical regulator of cellular and organ growth, development, migration, differentiation and survival and of epithelial calcium ion transport. Acts by binding to its receptor, PTH1R, activating G protein-coupled receptor signaling. Regulates endochondral bone development and epithelial-mesenchymal interactions during the formation of the mammary glands and teeth. Required for skeletal homeostasis. Promotes mammary mesenchyme differentiation and bud outgrowth by modulating mesenchymal cell responsiveness to BMPs. Up-regulates BMPR1A expression in the mammary mesenchyme and this increases the sensitivity of these cells to BMPs and allows them to respond to BMP4 in a paracrine and/or autocrine fashion. BMP4 signaling in the mesenchyme, in turn, triggers epithelial outgrowth and augments MSX2 expression, which causes the mammary mesenchyme to inhibit hair follicle formation within the nipple sheath. In terms of biological role, potent inhibitor of osteoclastic bone resorption. The polypeptide is Parathyroid hormone-related protein (Pthlh) (Rattus norvegicus (Rat)).